The following is a 393-amino-acid chain: Branched-chain-amino-acid aminotransferase, mitochondrial (393 aa).

Residues 1-27 constitute a mitochondrion transit peptide; the sequence is MSAAILGQVWTRKLLPIPWRLCVPGRC. Tyr-169 contributes to the substrate binding site. Lys-230 carries the post-translational modification N6-(pyridoxal phosphate)lysine. Lys-322 carries the post-translational modification N6-acetyllysine.

The protein belongs to the class-IV pyridoxal-phosphate-dependent aminotransferase family. In terms of assembly, homodimer. Requires pyridoxal 5'-phosphate as cofactor. Expressed in all tissues.

It is found in the mitochondrion. The catalysed reaction is L-leucine + 2-oxoglutarate = 4-methyl-2-oxopentanoate + L-glutamate. It catalyses the reaction L-isoleucine + 2-oxoglutarate = (S)-3-methyl-2-oxopentanoate + L-glutamate. The enzyme catalyses L-valine + 2-oxoglutarate = 3-methyl-2-oxobutanoate + L-glutamate. Functionally, catalyzes the first reaction in the catabolism of the essential branched chain amino acids leucine, isoleucine, and valine. May also function as a transporter of branched chain alpha-keto acids. The sequence is that of Branched-chain-amino-acid aminotransferase, mitochondrial (Bcat2) from Rattus norvegicus (Rat).